Reading from the N-terminus, the 170-residue chain is Large ribosomal subunit protein uL11 (170 aa).

Belongs to the universal ribosomal protein uL11 family. Part of the ribosomal stalk of the 50S ribosomal subunit. Interacts with L10 and the large rRNA to form the base of the stalk. L10 forms an elongated spine to which L12 dimers bind in a sequential fashion forming a multimeric L10(L12)X complex.

In terms of biological role, forms part of the ribosomal stalk which helps the ribosome interact with GTP-bound translation factors. The sequence is that of Large ribosomal subunit protein uL11 from Desulfurococcus amylolyticus (strain DSM 18924 / JCM 16383 / VKM B-2413 / 1221n) (Desulfurococcus kamchatkensis).